Here is a 341-residue protein sequence, read N- to C-terminus: Glycerol-3-phosphate dehydrogenase [NAD(P)+] (341 aa).

Ser-14, Phe-15, Arg-35, and Lys-108 together coordinate NADPH. 2 residues coordinate sn-glycerol 3-phosphate: Lys-108 and Gly-136. Ala-140 provides a ligand contact to NADPH. Sn-glycerol 3-phosphate is bound by residues Lys-191, Asp-244, Ser-254, Arg-255, and Asn-256. Lys-191 (proton acceptor) is an active-site residue. Arg-255 is an NADPH binding site. NADPH contacts are provided by Val-279 and Glu-281.

This sequence belongs to the NAD-dependent glycerol-3-phosphate dehydrogenase family.

The protein localises to the cytoplasm. It catalyses the reaction sn-glycerol 3-phosphate + NAD(+) = dihydroxyacetone phosphate + NADH + H(+). The catalysed reaction is sn-glycerol 3-phosphate + NADP(+) = dihydroxyacetone phosphate + NADPH + H(+). The protein operates within membrane lipid metabolism; glycerophospholipid metabolism. Functionally, catalyzes the reduction of the glycolytic intermediate dihydroxyacetone phosphate (DHAP) to sn-glycerol 3-phosphate (G3P), the key precursor for phospholipid synthesis. The chain is Glycerol-3-phosphate dehydrogenase [NAD(P)+] from Pseudomonas entomophila (strain L48).